The chain runs to 469 residues: Uronate isomerase (469 aa).

The protein belongs to the metallo-dependent hydrolases superfamily. Uronate isomerase family.

It catalyses the reaction D-glucuronate = D-fructuronate. The enzyme catalyses aldehydo-D-galacturonate = keto-D-tagaturonate. The protein operates within carbohydrate metabolism; pentose and glucuronate interconversion. This is Uronate isomerase from Rhizobium meliloti (strain 1021) (Ensifer meliloti).